The following is a 611-amino-acid chain: Dihydroxy-acid dehydratase (611 aa).

Mg(2+) is bound at residue D81. C122 contributes to the [2Fe-2S] cluster binding site. Mg(2+) contacts are provided by D123 and K124. K124 carries the post-translational modification N6-carboxylysine. C195 is a [2Fe-2S] cluster binding site. A Mg(2+)-binding site is contributed by E491. The active-site Proton acceptor is S517.

The protein belongs to the IlvD/Edd family. As to quaternary structure, homodimer. Requires [2Fe-2S] cluster as cofactor. Mg(2+) is required as a cofactor.

It carries out the reaction (2R)-2,3-dihydroxy-3-methylbutanoate = 3-methyl-2-oxobutanoate + H2O. The enzyme catalyses (2R,3R)-2,3-dihydroxy-3-methylpentanoate = (S)-3-methyl-2-oxopentanoate + H2O. The protein operates within amino-acid biosynthesis; L-isoleucine biosynthesis; L-isoleucine from 2-oxobutanoate: step 3/4. It functions in the pathway amino-acid biosynthesis; L-valine biosynthesis; L-valine from pyruvate: step 3/4. Functionally, functions in the biosynthesis of branched-chain amino acids. Catalyzes the dehydration of (2R,3R)-2,3-dihydroxy-3-methylpentanoate (2,3-dihydroxy-3-methylvalerate) into 2-oxo-3-methylpentanoate (2-oxo-3-methylvalerate) and of (2R)-2,3-dihydroxy-3-methylbutanoate (2,3-dihydroxyisovalerate) into 2-oxo-3-methylbutanoate (2-oxoisovalerate), the penultimate precursor to L-isoleucine and L-valine, respectively. This Pasteurella multocida (strain Pm70) protein is Dihydroxy-acid dehydratase.